The chain runs to 444 residues: Methylenetetrahydrofolate--tRNA-(uracil-5-)-methyltransferase TrmFO (444 aa).

Position 10 to 15 (10 to 15 (GAGLAG)) interacts with FAD.

This sequence belongs to the MnmG family. TrmFO subfamily. Requires FAD as cofactor.

The protein resides in the cytoplasm. The catalysed reaction is uridine(54) in tRNA + (6R)-5,10-methylene-5,6,7,8-tetrahydrofolate + NADH + H(+) = 5-methyluridine(54) in tRNA + (6S)-5,6,7,8-tetrahydrofolate + NAD(+). The enzyme catalyses uridine(54) in tRNA + (6R)-5,10-methylene-5,6,7,8-tetrahydrofolate + NADPH + H(+) = 5-methyluridine(54) in tRNA + (6S)-5,6,7,8-tetrahydrofolate + NADP(+). Catalyzes the folate-dependent formation of 5-methyl-uridine at position 54 (M-5-U54) in all tRNAs. The polypeptide is Methylenetetrahydrofolate--tRNA-(uracil-5-)-methyltransferase TrmFO (Streptococcus equi subsp. equi (strain 4047)).